A 130-amino-acid polypeptide reads, in one-letter code: Small ribosomal subunit protein uS9 (130 aa).

This sequence belongs to the universal ribosomal protein uS9 family.

This chain is Small ribosomal subunit protein uS9, found in Cupriavidus taiwanensis (strain DSM 17343 / BCRC 17206 / CCUG 44338 / CIP 107171 / LMG 19424 / R1) (Ralstonia taiwanensis (strain LMG 19424)).